The following is a 327-amino-acid chain: QQQPFATIAQEGKAPYIASMALRKLYMDRAVDEEELRAFTEMMVALDDEFEFDSYEVHHQANDTIDAVGDNKKDAKPEQGSIQSNPNKGKEKDVNAGTSGTHTVPRIKAITPKMRMPKSKGATVLNLEHLLEYAPQQIDISNTRATQSQFDTWYEAVRMAYDIGETEMPTVMNGLMVWCIENGTSPNVNGVWVMMDGNEQVGYPLKPIVENAKPTLRQIMAHFSDVAEAYIEMRNKKEPYMPRYGLIRNLRDVGLARYAFDFYEVTSRTPVRAREAHIQMKAAALKSAQPRLFGLDGGISTQEENTERHTTEDVSPSMHTLLGVKNM.

Positions 65-102 (IDAVGDNKKDAKPEQGSIQSNPNKGKEKDVNAGTSGTH) are disordered.

This sequence belongs to the potyviridae genome polyprotein family. In terms of processing, genome polyprotein of potyviruses undergoes post-translational proteolytic processing by the main proteinase NIa-pro resulting in the production of at least ten individual proteins. The P1 proteinase and the HC-pro cleave only their respective C-termini autocatalytically. 6K1 is essential for proper proteolytic separation of P3 from CI.

It localises to the virion. The enzyme catalyses RNA(n) + a ribonucleoside 5'-triphosphate = RNA(n+1) + diphosphate. Its function is as follows. An RNA-dependent RNA polymerase that plays an essential role in the virus replication. In terms of biological role, involved in aphid transmission, cell-to-cell and systemis movement, encapsidation of the viral RNA and in the regulation of viral RNA amplification. This Potato virus Y (strain Chinese) (PVY) protein is Genome polyprotein.